Consider the following 413-residue polypeptide: Divalent metal cation transporter MntH (413 aa).

11 consecutive transmembrane segments (helical) span residues 19 to 39 (LALMGPAFVAAIGYIDPGNFA), 46 to 66 (ASFGYQLLWVVVWANLMAMLI), 94 to 114 (VWFYWVQAEIIAMATDLAEFI), 122 to 142 (LVLGVSLLQGAVLTGVATFLI), 156 to 176 (VIGGLLLFVAVAYVVELIFSQ), 196 to 216 (AVFLAAGVLGATIMPHVIYLH), 241 to 261 (IAMTIAGFVNLAMMATAAAAF), 290 to 310 (IFGLSLVAAGLSSTVVGTLAG), 329 to 349 (AVTMLPSFVVILLGLDPTRIL), 350 to 370 (VMSQVLLSFGIALALVPLLIF), and 392 to 412 (VIVAIVVSLNGWLIVGSLLGV).

The protein belongs to the NRAMP family.

It localises to the cell inner membrane. Functionally, h(+)-stimulated, divalent metal cation uptake system. The protein is Divalent metal cation transporter MntH of Klebsiella pneumoniae (strain 342).